The chain runs to 211 residues: Tudor-interacting repair regulator protein (211 aa).

Residues K10 and K151 each participate in a glycyl lysine isopeptide (Lys-Gly) (interchain with G-Cter in ubiquitin) cross-link. Residues 118–205 (TLEQLHAVEI…TEKQKKALEK (88 aa)) form an interaction with PXN region.

The protein belongs to the Nudix hydrolase family. TIRR subfamily. In terms of assembly, homodimer. Interacts with TP53BP1 (via the Tudor-like domain); interaction is abolished following DNA damage and TP53BP1 phosphorylation by ATM. Interacts (via the cytoplasmic part) with SDC4. Interacts with TGFB1I1 and PXN.

It localises to the nucleus. Functionally, key regulator of TP53BP1 required to stabilize TP53BP1 and regulate its recruitment to chromatin. In absence of DNA damage, interacts with the tandem Tudor-like domain of TP53BP1, masking the region that binds histone H4 dimethylated at 'Lys-20' (H4K20me2), thereby preventing TP53BP1 recruitment to chromatin and maintaining TP53BP1 localization to the nucleus. Following DNA damage, ATM-induced phosphorylation of TP53BP1 and subsequent recruitment of RIF1 leads to dissociate NUDT16L1/TIRR from TP53BP1, unmasking the tandem Tudor-like domain and allowing recruitment of TP53BP1 to DNA double strand breaks (DSBs). Binds U8 snoRNA. The sequence is that of Tudor-interacting repair regulator protein from Mus musculus (Mouse).